Here is a 425-residue protein sequence, read N- to C-terminus: UDP-N-acetyl-D-glucosamine 6-dehydrogenase (425 aa).

NAD(+) is bound by residues V17, D35, R40, T86, and T121. C261 functions as the Nucleophile in the catalytic mechanism. R332 is an NAD(+) binding site.

This sequence belongs to the UDP-glucose/GDP-mannose dehydrogenase family. In terms of assembly, homotrimer.

The enzyme catalyses UDP-N-acetyl-alpha-D-glucosamine + 2 NAD(+) + H2O = UDP-2-acetamido-2-deoxy-alpha-D-glucuronate + 2 NADH + 3 H(+). Its pathway is capsule biogenesis; capsule polysaccharide biosynthesis. It participates in glycan metabolism; Vi-antigen biosynthesis. Functionally, dehydrogenase required for the biosynthesis of the capsular polysaccharide, commonly referred as the Vi antigen, an important virulence factor. Catalyzes the conversion of UDP-N-acetylglucosamine (UDP-GlcNAc) to UDP-N-acetylglucosaminuronic acid (UDP-GlcNAcA). Cannot use UDP-GalNAc, UDP-Glc and UDP-Gal as substrates. This chain is UDP-N-acetyl-D-glucosamine 6-dehydrogenase, found in Salmonella typhi.